The following is a 275-amino-acid chain: F-box only protein 50 (275 aa).

The segment at Met-1–Ala-67 is disordered. Residues Pro-26–Ala-62 are compositionally biased toward pro residues. A phosphoserine mark is found at Ser-31, Ser-37, and Ser-49. Residues Leu-95–Leu-273 form the FBA domain.

In terms of tissue distribution, expressed in the esophagus, oral cavity, skin, tongue and reproductive organs.

It is found in the cytoplasm. Promotes cell proliferation. The polypeptide is F-box only protein 50 (NCCRP1) (Homo sapiens (Human)).